The following is a 105-amino-acid chain: Cyclotide vibi-E (105 aa).

Residues 1 to 9 form the signal peptide; it reads AAFALPALA. A propeptide spanning residues 10–69 is cleaved from the precursor; the sequence is SSFEKDVISFRAIQAVLEKRGLSKLEDDPVLSALAHTKTIISNPVIEEALLNGANLKAGN. The segment at residues 70-99 is a cross-link (cyclopeptide (Gly-Asn)); it reads GIPCAESCVWIPCTVTALIGCGCSNKVCYN. Disulfide bonds link Cys-73/Cys-90, Cys-77/Cys-92, and Cys-82/Cys-97. The propeptide occupies 100–105; sequence SLQTKY.

Post-translationally, this is a cyclic peptide.

In terms of biological role, probably participates in a plant defense mechanism. Has cytotoxic activity, active against a human lymphoma cell line with an IC(50) of 3.2 uM. This is Cyclotide vibi-E from Viola biflora (Yellow wood violet).